Here is a 372-residue protein sequence, read N- to C-terminus: Tubby-like F-box protein 9 (372 aa).

The tract at residues 1-51 (MALWRCSSSWLSSVSRSSGGVGGGESKVSPEIAPVSGGEGEGEEEEGEEER) is disordered. Residues 7 to 18 (SSSWLSSVSRSS) show a composition bias toward low complexity. The segment covering 40 to 49 (GEGEEEEGEE) has biased composition (acidic residues). The F-box domain maps to 50 to 105 (ERWSRLLPELLTEIMRRVDAGAERWPPRRDVVACACVCRRWRDAAVSVVRPPLECG).

Belongs to the TUB family. As to expression, ubiquitous.

In Oryza sativa subsp. japonica (Rice), this protein is Tubby-like F-box protein 9 (TULP9).